The primary structure comprises 174 residues: Larval cuticle protein A1A (174 aa).

Repeat copies occupy residues 45–48 (AAPV) and 67–70 (AAPV). The Chitin-binding type R&amp;R domain maps to 84-150 (NPQYSFGYDV…AVVHREPLVA (67 aa)). Residues 155–158 (AAPA) form repeat 3.

Component of the cuticle of the larva of Tenebrio molitor. In Tenebrio molitor (Yellow mealworm beetle), this protein is Larval cuticle protein A1A.